A 245-amino-acid chain; its full sequence is tRNA pseudouridine synthase A (245 aa).

Asp-52 serves as the catalytic Nucleophile. Residue Tyr-112 coordinates substrate.

The protein belongs to the tRNA pseudouridine synthase TruA family. In terms of assembly, homodimer.

The enzyme catalyses uridine(38/39/40) in tRNA = pseudouridine(38/39/40) in tRNA. Its function is as follows. Formation of pseudouridine at positions 38, 39 and 40 in the anticodon stem and loop of transfer RNAs. The protein is tRNA pseudouridine synthase A of Dictyoglomus thermophilum (strain ATCC 35947 / DSM 3960 / H-6-12).